The following is a 281-amino-acid chain: 2,3,4,5-tetrahydropyridine-2,6-dicarboxylate N-succinyltransferase (281 aa).

This sequence belongs to the transferase hexapeptide repeat family.

It localises to the cytoplasm. It carries out the reaction (S)-2,3,4,5-tetrahydrodipicolinate + succinyl-CoA + H2O = (S)-2-succinylamino-6-oxoheptanedioate + CoA. It participates in amino-acid biosynthesis; L-lysine biosynthesis via DAP pathway; LL-2,6-diaminopimelate from (S)-tetrahydrodipicolinate (succinylase route): step 1/3. In Methylobacterium sp. (strain 4-46), this protein is 2,3,4,5-tetrahydropyridine-2,6-dicarboxylate N-succinyltransferase.